The chain runs to 121 residues: Small ribosomal subunit protein uS13 (121 aa).

Positions 91–121 (HRRGLPVRGQNTKNNARTRKGPSKTVAGKKK) are disordered. Residues 106–121 (ARTRKGPSKTVAGKKK) show a composition bias toward basic residues.

Belongs to the universal ribosomal protein uS13 family. In terms of assembly, part of the 30S ribosomal subunit. Forms a loose heterodimer with protein S19. Forms two bridges to the 50S subunit in the 70S ribosome.

Its function is as follows. Located at the top of the head of the 30S subunit, it contacts several helices of the 16S rRNA. In the 70S ribosome it contacts the 23S rRNA (bridge B1a) and protein L5 of the 50S subunit (bridge B1b), connecting the 2 subunits; these bridges are implicated in subunit movement. Contacts the tRNAs in the A and P-sites. In Listeria monocytogenes serotype 4b (strain CLIP80459), this protein is Small ribosomal subunit protein uS13.